A 458-amino-acid chain; its full sequence is ATP synthase subunit beta (458 aa).

Position 148-155 (148-155 (GGAGVGKT)) interacts with ATP.

It belongs to the ATPase alpha/beta chains family. In terms of assembly, F-type ATPases have 2 components, CF(1) - the catalytic core - and CF(0) - the membrane proton channel. CF(1) has five subunits: alpha(3), beta(3), gamma(1), delta(1), epsilon(1). CF(0) has three main subunits: a(1), b(2) and c(9-12). The alpha and beta chains form an alternating ring which encloses part of the gamma chain. CF(1) is attached to CF(0) by a central stalk formed by the gamma and epsilon chains, while a peripheral stalk is formed by the delta and b chains.

Its subcellular location is the cell inner membrane. It catalyses the reaction ATP + H2O + 4 H(+)(in) = ADP + phosphate + 5 H(+)(out). In terms of biological role, produces ATP from ADP in the presence of a proton gradient across the membrane. The catalytic sites are hosted primarily by the beta subunits. The polypeptide is ATP synthase subunit beta (Pseudomonas fluorescens (strain ATCC BAA-477 / NRRL B-23932 / Pf-5)).